The primary structure comprises 1100 residues: SLIT-ROBO Rho GTPase-activating protein 2 (1100 aa).

Positions 19-324 constitute an F-BAR domain; that stretch reads TQVKEIRAQL…AAENLEANSD (306 aa). Coiled-coil stretches lie at residues 170–201 and 363–400; these read YNMDSINAESKLKEAEKQEEKQMSRSVRHEEK and GELIQRCQQLQSRLSTLNIENEEVKKTMEATLQTIQDM. The span at 181–203 shows a compositional bias: basic and acidic residues; it reads LKEAEKQEEKQMSRSVRHEEKQT. A disordered region spans residues 181–210; sequence LKEAEKQEEKQMSRSVRHEEKQTPRSPDSL. The 185-residue stretch at 496–680 folds into the Rho-GAP domain; that stretch reads VRKQEAIQII…TIIIHHESIF (185 aa). Residues 738–797 enclose the SH3 domain; that stretch reads SDPIEAIARFDYSGRTNRELSFKKGASLLLYSRASDDWWEGRHNGTEGLVPHQYIVVQDM. Disordered regions lie at residues 800 to 835 and 852 to 938; these read GYAGRGSPKADLEGSHDSVEEKVSTRASASSPTGGH and EATS…PLDP. Basic and acidic residues predominate over residues 807-823; it reads PKADLEGSHDSVEEKVS. Residues 919–932 are compositionally biased toward polar residues; the sequence is RKSTPTGRSKSFSN. Residues 945 to 972 are a coiled coil; the sequence is EHSSQDIEATMNTALSELRELERQSNVK. Residues 986–1100 are disordered; the sequence is KSGGTSEPSS…PPPTDKSCPV (115 aa). 2 stretches are compositionally biased toward polar residues: residues 987 to 997 and 1008 to 1049; these read SGGTSEPSSPL and SQHP…GSTF. Residues 1067 to 1081 show a composition bias toward low complexity; sequence SSSAGGSPAMGSPTT. A compositionally biased stretch (pro residues) spans 1082 to 1094; it reads TIPPTPPPPPPPT.

Its subcellular location is the cell membrane. It localises to the cell projection. It is found in the dendritic spine. The protein resides in the postsynaptic density. The protein localises to the postsynaptic cell membrane. Its subcellular location is the lamellipodium. It localises to the cytoplasmic vesicle. It is found in the phagosome. The protein resides in the nucleus. The protein localises to the cytoplasm. Its subcellular location is the cytosol. Functionally, postsynaptic RAC1 GTPase activating protein (GAP) that plays a key role in neuronal morphogenesis and migration mainly during development of the cerebral cortex. Regulates excitatory and inhibitory synapse maturation and density in cortical pyramidal neurons. Mechanistically, acts by binding and deforming membranes, thereby regulating actin dynamics to regulate cell migration and differentiation. This chain is SLIT-ROBO Rho GTPase-activating protein 2 (srgap2), found in Danio rerio (Zebrafish).